We begin with the raw amino-acid sequence, 184 residues long: ATP synthase subunit b, chloroplastic (184 aa).

The helical transmembrane segment at 26 to 48 (ILATNLINLSVVLGVLIFFGKGV) threads the bilayer.

It belongs to the ATPase B chain family. F-type ATPases have 2 components, F(1) - the catalytic core - and F(0) - the membrane proton channel. F(1) has five subunits: alpha(3), beta(3), gamma(1), delta(1), epsilon(1). F(0) has four main subunits: a(1), b(1), b'(1) and c(10-14). The alpha and beta chains form an alternating ring which encloses part of the gamma chain. F(1) is attached to F(0) by a central stalk formed by the gamma and epsilon chains, while a peripheral stalk is formed by the delta, b and b' chains.

Its subcellular location is the plastid. The protein resides in the chloroplast thylakoid membrane. Its function is as follows. F(1)F(0) ATP synthase produces ATP from ADP in the presence of a proton or sodium gradient. F-type ATPases consist of two structural domains, F(1) containing the extramembraneous catalytic core and F(0) containing the membrane proton channel, linked together by a central stalk and a peripheral stalk. During catalysis, ATP synthesis in the catalytic domain of F(1) is coupled via a rotary mechanism of the central stalk subunits to proton translocation. Functionally, component of the F(0) channel, it forms part of the peripheral stalk, linking F(1) to F(0). This is ATP synthase subunit b, chloroplastic from Calycanthus floridus var. glaucus (Eastern sweetshrub).